We begin with the raw amino-acid sequence, 142 residues long: Large ribosomal subunit protein uL11 (142 aa).

It belongs to the universal ribosomal protein uL11 family. As to quaternary structure, part of the ribosomal stalk of the 50S ribosomal subunit. Interacts with L10 and the large rRNA to form the base of the stalk. L10 forms an elongated spine to which L12 dimers bind in a sequential fashion forming a multimeric L10(L12)X complex. One or more lysine residues are methylated.

In terms of biological role, forms part of the ribosomal stalk which helps the ribosome interact with GTP-bound translation factors. The chain is Large ribosomal subunit protein uL11 from Mesoplasma florum (strain ATCC 33453 / NBRC 100688 / NCTC 11704 / L1) (Acholeplasma florum).